The following is a 107-amino-acid chain: Ferredoxin-1 (107 aa).

4Fe-4S ferredoxin-type domains lie at 2–30 and 31–60; these read AFVV…YEGP and NFLV…SEDE. The [3Fe-4S] cluster site is built by Cys-9 and Cys-17. Cys-21, Cys-40, Cys-43, and Cys-46 together coordinate [4Fe-4S] cluster. Position 50 (Cys-50) interacts with [3Fe-4S] cluster. The disordered stretch occupies residues 84-107; the sequence is EKKDPLPDAEDWDGVKGKLQHLER. Basic and acidic residues predominate over residues 96–107; the sequence is DGVKGKLQHLER.

Requires [4Fe-4S] cluster as cofactor. It depends on [3Fe-4S] cluster as a cofactor.

Ferredoxins are iron-sulfur proteins that transfer electrons in a wide variety of metabolic reactions. This ferredoxin could play a role in regulating gene expression by interacting directly with DNA. In Azotobacter vinelandii, this protein is Ferredoxin-1 (fdxA).